The primary structure comprises 433 residues: Origin recognition complex subunit 4 (433 aa).

Residue Lys7 is modified to N6-methyllysine. 65–72 (GPRGSGKT) contacts ATP.

This sequence belongs to the ORC4 family. Component of ORC, a complex composed of at least 6 subunits: ORC1, ORC2, ORC3, ORC4, ORC5 and ORC6. ORC is regulated in a cell-cycle dependent manner. It is sequentially assembled at the exit from anaphase of mitosis and disassembled as cells enter S phase. Interacts with DBF4. Interacts with POLQ.

It is found in the nucleus. Binds histone H3 and H4 trimethylation marks H3K9me3, H3K27me3 and H4K20me3. Component of the origin recognition complex (ORC) that binds origins of replication. DNA-binding is ATP-dependent. The specific DNA sequences that define origins of replication have not been identified yet. ORC is required to assemble the pre-replication complex necessary to initiate DNA replication. The sequence is that of Origin recognition complex subunit 4 (Orc4) from Mus musculus (Mouse).